The sequence spans 359 residues: tRNA N6-adenosine threonylcarbamoyltransferase (359 aa).

The Fe cation site is built by His115 and His119. Residues 137–141 (LVSGG), Asp170, Gly183, and Asn283 contribute to the substrate site. Asp311 is a Fe cation binding site. The tract at residues 328–359 (APDSLDIAPRSRWPLDEKSAPVFGTGRRGAKA) is disordered.

This sequence belongs to the KAE1 / TsaD family. Requires Fe(2+) as cofactor.

Its subcellular location is the cytoplasm. The enzyme catalyses L-threonylcarbamoyladenylate + adenosine(37) in tRNA = N(6)-L-threonylcarbamoyladenosine(37) in tRNA + AMP + H(+). In terms of biological role, required for the formation of a threonylcarbamoyl group on adenosine at position 37 (t(6)A37) in tRNAs that read codons beginning with adenine. Is involved in the transfer of the threonylcarbamoyl moiety of threonylcarbamoyl-AMP (TC-AMP) to the N6 group of A37, together with TsaE and TsaB. TsaD likely plays a direct catalytic role in this reaction. The protein is tRNA N6-adenosine threonylcarbamoyltransferase of Brucella canis (strain ATCC 23365 / NCTC 10854 / RM-666).